A 115-amino-acid polypeptide reads, in one-letter code: U3-lycotoxin-Ls1i (115 aa).

A signal peptide spans 1-20; the sequence is MKFVLLFGVFLVTLFSYSSA. A propeptide spanning residues 21-44 is cleaved from the precursor; the sequence is EMLDDFDQADEDELLSLIEKEEAR. Intrachain disulfides connect Cys-48–Cys-63, Cys-55–Cys-72, Cys-62–Cys-87, and Cys-74–Cys-85.

The protein belongs to the neurotoxin 19 (CSTX) family. 01 subfamily. As to expression, expressed by the venom gland.

It is found in the secreted. The polypeptide is U3-lycotoxin-Ls1i (Lycosa singoriensis (Wolf spider)).